The primary structure comprises 1052 residues: MENLESRLKNAPYFRCEKGTDSIPLCRKCETCVLAWKIFSTKEWFCRINDISQRRFLVGILKQLNSLYLLHYFQNILQTTQGKDFIYNRSRINLSKKEGKVVKSSLNQMLDKTVEQKMKEILYWFANSTQWTKANYTLLLLQMCNPKLLLTAANVIRVLFLREENNISGLNQDITDVCFSPEKDHSSKSATSQVYWTAKTQHTSLPLSKAPENEHLLGAASNPEEPWRNSLRCISEMNRLFSGKGDITKPGYDPCNLLVDLDDIRDLSSGFSKYRDFIRYLPIHLSKYILRMLDRHTLNKCASVSQHWAAMAQQVKMDLSAHGFIQNQITFLQGSYTRGIDPNYANKVSIPVPKMVDDGKSMRVKHPKWKLRTKNEYNLWTAYQNEETQQVLIEERNVFCGTYNVRILSDTWDQNRVIHYSGGDLIAVSSNRKIHLLDIIQVKAIPVEFRGHAGSVRALFLCEEENFLLSGSYDLSIRYWDLKSGVCTRIFGGHQGTITCMDLCKNRLVSGGRDCQVKVWDVDTGKCLKTFRHKDPILATRINDTYIVSSCERGLVKVWHIAMAQLVKTLSGHEGAVKCLFFDQWHLLSGSTDGLVMAWSMVGKYERCLMAFKHPKEVLDVSLLFLRVISACADGKIRIYNFLNGNCMKVLKANGRGDPVLSFFIQGNRMVVNTESNVLMFQFEHIKWQYAVEKTKQKKNKEKEEEKEENSLMEILSKCNIQVHSPRESVSSKQTVIQELLPGKPPKSRVLLKPAKFSSAVLIEELQSQGKSKSPRRDADDVEKAQKQGQLETPGKLPSHPKKKSWKIPMSPDQFLLTVSALQHAHNSGEFAYPCRPQTEITDVWGPSISYPRKVLNFKGKSIQRAVDRLRLSNPPIDVKRTSIPLEIQKLQPNLKISLHSPRVQSTIPQPMIIRSRFSGSLKGGDQVTSSIERAVCSTGPLTSMQVIKPNRMLAPQVGTATLSLKKERPRIYTALDPFRVNTEFVLLTVKEEKEHQEAKMKEYQARESTGVVDPGKVSKAAWIRKIKGLPIDNFTKQGKTAAPELGQNVFI.

Residues 169-206 (GLNQDITDVCFSPEKDHSSKSATSQVYWTAKTQHTSLP) form a WD 1 repeat. Residues 276-323 (DFIRYLPIHLSKYILRMLDRHTLNKCASVSQHWAAMAQQVKMDLSAHG) form the F-box domain. WD repeat units lie at residues 409–447 (SDTW…AIPV), 451–490 (GHAG…CTRI), 493–532 (GHQG…KTFR), 534–569 (KDPI…LVKT), 572–609 (GHEG…ERCL), and 611–652 (AFKH…KVLK). Residues 690–719 (YAVEKTKQKKNKEKEEEKEENSLMEILSKC) are a coiled coil. Positions 766 to 805 (LQSQGKSKSPRRDADDVEKAQKQGQLETPGKLPSHPKKKS) are disordered. Residues 775–786 (PRRDADDVEKAQ) show a composition bias toward basic and acidic residues. A coiled-coil region spans residues 986–1010 (VLLTVKEEKEHQEAKMKEYQAREST).

Its function is as follows. Probable substrate-recognition component of a SCF (SKP1-CUL1-F-box protein)-type E3 ubiquitin ligase complex which mediates the ubiquitination and subsequent proteasomal degradation of target proteins. Overexpression is leading to degradation of CBX5 and CBX1. In Homo sapiens (Human), this protein is F-box/WD repeat-containing protein 10 (FBXW10).